The sequence spans 60 residues: Myrmicitoxin(1)-Pr4b (60 aa).

The first 23 residues, 1–23 (MKAIIFLFAVLTVVAIIIPIISG), serve as a signal peptide directing secretion. Residues 24–33 (EPNAGPHAAS) constitute a propeptide that is removed on maturation. Glutamine 59 bears the Glutamine amide mark.

The protein belongs to the formicidae venom clade 2 family. In terms of tissue distribution, expressed by the venom gland.

Its subcellular location is the secreted. Its function is as follows. Toxin that causes a rapid and irreversible paralysis when intrathoracically injected into insects (blowflies). Does not cause spontaneous nocifensive behaviors by intraplantar injection in mice. The sequence is that of Myrmicitoxin(1)-Pr4b from Pogonomyrmex rugosus (Desert harvester ant).